The sequence spans 498 residues: MASQGTKRSYEQMETDGERQNATEIRASVGKMIDGIGRFYIQMCTELKLSDYEGRLIQNSLTIERMVLSAFDERRNRYLEEHPSAGKDPKKTGGPIYKRVDGKWMRELVLYDKEEIRRIWRQANNGDDATAGLTHMMIWHSNLNDTTYQRTRALVRTGMDPRMCSLMQGSTLPRRSGAAGAAVKGVGTMVMELIRMIKRGINDRNFWRGENGRKTRSAYERMCNILKGKFQTAAQRAMMDQVRESRNPGNAEIEDLIFSARSALILRGSVAHKSCLPACVYGPAVASGYNFEKEGYSLVGIDPFKLLQNSQVYSLIRPNENPAHKSQLVWMACHSAAFEDLRLLSFIRGTKVSPRGKLSTRGVQIASNENMDTMESSTLELRSRYWAIRTRSGGNTNQQRASAGQISVQPAFSVQRNLPFDKSTIMAAFTGNTEGRTSDMRAEIIRMMEGAKPEEVSFRGRGVFELSDEKATNPVVPSFDMSNEGSYFFGDNAEEYDN.

The Unconventional nuclear localization signal motif lies at M1–E18. Residues M1–N21 form a disordered region. Over residues R8–N21 the composition is skewed to basic and acidic residues. Residues K198–R216 carry the Bipartite nuclear localization signal motif.

Belongs to the influenza viruses nucleoprotein family. Homomultimerizes to form the nucleocapsid. May bind host exportin-1/XPO1. Binds to viral genomic RNA. Protein-RNA contacts are mediated by a combination of electrostatic interactions between positively charged residues and the phosphate backbone and planar interactions between aromatic side chains and bases. Late in virus-infected cells, may be cleaved from a 56-kDa protein to a 53-kDa protein by a cellular caspase. This cleavage might be a marker for the onset of apoptosis in infected cells or have a specific function in virus host interaction.

The protein resides in the virion. The protein localises to the host nucleus. Functionally, encapsidates the negative strand viral RNA, protecting it from nucleases. The encapsidated genomic RNA is termed the ribonucleoprotein (RNP) and serves as template for transcription and replication. The RNP needs to be localized in the host nucleus to start an infectious cycle, but is too large to diffuse through the nuclear pore complex. NP comprises at least 2 nuclear localization signals that are responsible for the active RNP import into the nucleus through cellular importin alpha/beta pathway. Later in the infection, nclear export of RNPs are mediated through viral proteins NEP interacting with M1 which binds nucleoproteins. It is possible that nucleoprotein binds directly host exportin-1/XPO1 and plays an active role in RNPs nuclear export. M1 interaction with RNP seems to hide nucleoprotein's nuclear localization signals. Soon after a virion infects a new cell, M1 dissociates from the RNP under acidification of the virion driven by M2 protein. Dissociation of M1 from RNP unmasks nucleoprotein's nuclear localization signals, targeting the RNP to the nucleus. This is Nucleoprotein from Influenza A virus (strain A/Beijing/39/1975 H3N2).